A 400-amino-acid polypeptide reads, in one-letter code: Elongation factor Tu 1 (400 aa).

The region spanning K10 to Q209 is the tr-type G domain. The G1 stretch occupies residues G19–T26. G19 to T26 serves as a coordination point for GTP. T26 is a Mg(2+) binding site. The G2 stretch occupies residues G60–N64. Residues D81–G84 are G3. GTP-binding positions include D81 to H85 and N136 to D139. The segment at N136 to D139 is G4. Residues S174 to L176 form a G5 region.

Belongs to the TRAFAC class translation factor GTPase superfamily. Classic translation factor GTPase family. EF-Tu/EF-1A subfamily. As to quaternary structure, monomer.

The protein localises to the cytoplasm. The catalysed reaction is GTP + H2O = GDP + phosphate + H(+). GTP hydrolase that promotes the GTP-dependent binding of aminoacyl-tRNA to the A-site of ribosomes during protein biosynthesis. The chain is Elongation factor Tu 1 from Syntrophomonas wolfei subsp. wolfei (strain DSM 2245B / Goettingen).